The sequence spans 315 residues: Glycine--tRNA ligase alpha subunit (315 aa).

It belongs to the class-II aminoacyl-tRNA synthetase family. Tetramer of two alpha and two beta subunits.

It is found in the cytoplasm. It carries out the reaction tRNA(Gly) + glycine + ATP = glycyl-tRNA(Gly) + AMP + diphosphate. The polypeptide is Glycine--tRNA ligase alpha subunit (Pseudomonas paraeruginosa (strain DSM 24068 / PA7) (Pseudomonas aeruginosa (strain PA7))).